The chain runs to 156 residues: ATP synthase subunit b (156 aa).

A helical transmembrane segment spans residues 7 to 29; the sequence is LIGQSITFIFFVWFSMKFVWPPI.

This sequence belongs to the ATPase B chain family. In terms of assembly, F-type ATPases have 2 components, F(1) - the catalytic core - and F(0) - the membrane proton channel. F(1) has five subunits: alpha(3), beta(3), gamma(1), delta(1), epsilon(1). F(0) has three main subunits: a(1), b(2) and c(10-14). The alpha and beta chains form an alternating ring which encloses part of the gamma chain. F(1) is attached to F(0) by a central stalk formed by the gamma and epsilon chains, while a peripheral stalk is formed by the delta and b chains.

It is found in the cell inner membrane. In terms of biological role, f(1)F(0) ATP synthase produces ATP from ADP in the presence of a proton or sodium gradient. F-type ATPases consist of two structural domains, F(1) containing the extramembraneous catalytic core and F(0) containing the membrane proton channel, linked together by a central stalk and a peripheral stalk. During catalysis, ATP synthesis in the catalytic domain of F(1) is coupled via a rotary mechanism of the central stalk subunits to proton translocation. Component of the F(0) channel, it forms part of the peripheral stalk, linking F(1) to F(0). This Thiobacillus denitrificans (strain ATCC 25259 / T1) protein is ATP synthase subunit b.